A 419-amino-acid chain; its full sequence is UDP-N-acetylglucosamine 1-carboxyvinyltransferase (419 aa).

22–23 (KN) is a binding site for phosphoenolpyruvate. Arg91 provides a ligand contact to UDP-N-acetyl-alpha-D-glucosamine. Cys115 acts as the Proton donor in catalysis. Cys115 bears the 2-(S-cysteinyl)pyruvic acid O-phosphothioketal mark. UDP-N-acetyl-alpha-D-glucosamine contacts are provided by residues 120–124 (RPVDL), 160–163 (KVSV), Asp305, and Ile327.

It belongs to the EPSP synthase family. MurA subfamily.

Its subcellular location is the cytoplasm. It carries out the reaction phosphoenolpyruvate + UDP-N-acetyl-alpha-D-glucosamine = UDP-N-acetyl-3-O-(1-carboxyvinyl)-alpha-D-glucosamine + phosphate. It participates in cell wall biogenesis; peptidoglycan biosynthesis. Cell wall formation. Adds enolpyruvyl to UDP-N-acetylglucosamine. The chain is UDP-N-acetylglucosamine 1-carboxyvinyltransferase from Cronobacter sakazakii (strain ATCC BAA-894) (Enterobacter sakazakii).